Reading from the N-terminus, the 634-residue chain is Ankyrin repeat protein OPG025 (634 aa).

ANK repeat units follow at residues 36–69 (DGET…YKNI), 70–100 (NDFD…EINS), 103–134 (NGIN…PTCS), 175–211 (MGKT…EMRY), 307–337 (IQDL…TLYR), and 412–441 (HGCS…DINI).

It belongs to the orthopoxvirus OPG025 family. Interacts with components of host SCF complex CUL1 and SKP1 and components of the cullin deneddylation/COP9 signalosome complex subunits COPS7A and COPS7B.

In terms of biological role, plays a role in the inhibition of host immune repsonse by counteracting the action of interferons on early events in the viral replication cycle. In Vaccinia virus (strain Western Reserve) (VACV), this protein is Ankyrin repeat protein OPG025 (OPG035).